A 145-amino-acid chain; its full sequence is Bacilliredoxin SAR1592 (145 aa).

This sequence belongs to the bacilliredoxin family.

The protein is Bacilliredoxin SAR1592 of Staphylococcus aureus (strain MRSA252).